The chain runs to 305 residues: Carbonic anhydrase 5A, mitochondrial (305 aa).

The N-terminal 38 residues, Met-1 to Ser-38, are a transit peptide targeting the mitochondrion. In terms of domain architecture, Alpha-carbonic anhydrase spans Cys-39–Phe-296. Positions 130, 132, and 155 each coordinate Zn(2+).

Belongs to the alpha-carbonic anhydrase family. The cofactor is Zn(2+).

The protein resides in the mitochondrion. It catalyses the reaction hydrogencarbonate + H(+) = CO2 + H2O. With respect to regulation, activated by L- and D-histidine. Activated by L- and D-phenylalanine. Activated by L-adrenaline. Inhibited by coumarins, sulfonamide derivatives such as acetazolamide and Foscarnet (phosphonoformate trisodium salt). Activated by histamine. Mitochondrial carbonic anhydrase that catalyzes the reversible conversion of carbon dioxide to bicarbonate/HCO3. Mitochondria are impermeable to HCO3, and thus this intramitochondrial carbonic anhydrase is pivotal in providing HCO3 for multiple mitochondrial enzymes that catalyze the formation of essential metabolites of intermediary metabolism in the urea and Krebs cycles. This chain is Carbonic anhydrase 5A, mitochondrial, found in Homo sapiens (Human).